We begin with the raw amino-acid sequence, 578 residues long: Cholesterol oxidase (578 aa).

Positions 15, 34, 85, 90, and 230 each coordinate FAD. H470 serves as the catalytic Proton acceptor. An FAD-binding site is contributed by G503. The disordered stretch occupies residues 529 to 551 (WPNKGETDRRPPQGEPYRRLAPI). Basic and acidic residues predominate over residues 533-546 (GETDRRPPQGEPYR).

Belongs to the GMC oxidoreductase family. Requires FAD as cofactor.

It localises to the secreted. The enzyme catalyses cholesterol + O2 = cholest-5-en-3-one + H2O2. The catalysed reaction is cholest-5-en-3-one = cholest-4-en-3-one. Its pathway is steroid metabolism; cholesterol degradation. Its function is as follows. Bifunctional enzyme that catalyzes the oxidation and isomerization of cholesterol to cholestenone (cholest-4-en-3-one), an initial step in the cholesterol degradation process. Contributes to virulence. The chain is Cholesterol oxidase (choD) from Mycobacterium tuberculosis (strain CDC 1551 / Oshkosh).